Consider the following 341-residue polypeptide: S-adenosylmethionine:tRNA ribosyltransferase-isomerase (341 aa).

It belongs to the QueA family. Monomer.

It localises to the cytoplasm. It catalyses the reaction 7-aminomethyl-7-carbaguanosine(34) in tRNA + S-adenosyl-L-methionine = epoxyqueuosine(34) in tRNA + adenine + L-methionine + 2 H(+). Its pathway is tRNA modification; tRNA-queuosine biosynthesis. Transfers and isomerizes the ribose moiety from AdoMet to the 7-aminomethyl group of 7-deazaguanine (preQ1-tRNA) to give epoxyqueuosine (oQ-tRNA). This is S-adenosylmethionine:tRNA ribosyltransferase-isomerase from Clostridium perfringens (strain ATCC 13124 / DSM 756 / JCM 1290 / NCIMB 6125 / NCTC 8237 / Type A).